The primary structure comprises 1321 residues: C-Jun-amino-terminal kinase-interacting protein 4 (1321 aa).

Methionine 1 is subject to N-acetylmethionine. The RH1 domain maps to valine 7–leucine 95. Positions alanine 66–methionine 166 form a coiled coil. Phosphoserine is present on residues serine 109, serine 183, serine 185, serine 194, and serine 203. The disordered stretch occupies residues serine 203–serine 308. Residue threonine 217 is modified to Phosphothreonine. Residues glutamate 236–valine 248 show a composition bias toward polar residues. Phosphoserine is present on residues serine 238, serine 251, serine 265, serine 268, and serine 272. A compositionally biased stretch (polar residues) spans aspartate 266–valine 285. Threonine 292 is subject to Phosphothreonine. Residues serine 311, serine 329, serine 332, and serine 347 each carry the phosphoserine modification. Residues alanine 322 to serine 332 show a composition bias toward polar residues. The disordered stretch occupies residues alanine 322–valine 341. A phosphothreonine mark is found at threonine 348, threonine 365, and threonine 418. Residues arginine 408–methionine 534 are a coiled coil. Positions leucine 473–aspartate 489 are enriched in basic and acidic residues. Disordered stretches follow at residues leucine 473–arginine 500 and serine 563–proline 600. Residues arginine 500–serine 604 enclose the RH2 domain. Residue threonine 586 is modified to Phosphothreonine. Serine 588 bears the Phosphoserine mark. At threonine 595 the chain carries Phosphothreonine. Serine 705, serine 728, serine 730, serine 732, and serine 733 each carry phosphoserine. The stretch at serine 724–valine 758 forms a coiled coil. A disordered region spans residues threonine 853–glutamate 883. Residues alanine 855–alanine 864 show a composition bias toward polar residues. A compositionally biased stretch (acidic residues) spans methionine 874 to glutamate 883. Position 1188 is a phosphoserine (serine 1188). The disordered stretch occupies residues proline 1239–lysine 1267. A compositionally biased stretch (polar residues) spans serine 1255–leucine 1266. Phosphothreonine is present on threonine 1264.

The protein belongs to the JIP scaffold family. As to quaternary structure, homodimer. The homodimer interacts with ARF6, forming a heterotetramer. Homooligomer. Interacts with MAX, MAPK8, MAPK14, MAP3K3, MYC, and MAP2K4. Interacts with KNS2. Interaction with KNS2 is important in the formation of ternary complex with MAPK8. Interacts with PIP4P1. Interacts with PIKFYVE. Phosphorylated by MAPK8 and MAPK14. As to expression, highly expressed in brain, kidney, liver, heart.

The protein resides in the cytoplasm. It is found in the perinuclear region. The protein localises to the lysosome membrane. In terms of biological role, the JNK-interacting protein (JIP) group of scaffold proteins selectively mediates JNK signaling by aggregating specific components of the MAPK cascade to form a functional JNK signaling module. Regulates lysosomal positioning by acting as an adapter protein which links PIP4P1-positive lysosomes to the dynein-dynactin complex. Assists PIKFYVE selective functionality in microtubule-based endosome-to-TGN trafficking. This Mus musculus (Mouse) protein is C-Jun-amino-terminal kinase-interacting protein 4.